The primary structure comprises 268 residues: Tryptophan synthase alpha chain (268 aa).

Residues E49 and D60 each act as proton acceptor in the active site.

This sequence belongs to the TrpA family. As to quaternary structure, tetramer of two alpha and two beta chains.

It carries out the reaction (1S,2R)-1-C-(indol-3-yl)glycerol 3-phosphate + L-serine = D-glyceraldehyde 3-phosphate + L-tryptophan + H2O. It participates in amino-acid biosynthesis; L-tryptophan biosynthesis; L-tryptophan from chorismate: step 5/5. The alpha subunit is responsible for the aldol cleavage of indoleglycerol phosphate to indole and glyceraldehyde 3-phosphate. The chain is Tryptophan synthase alpha chain from Mannheimia succiniciproducens (strain KCTC 0769BP / MBEL55E).